Reading from the N-terminus, the 183-residue chain is uncharacterized protein (183 aa).

4 helical membrane passes run 26 to 48, 72 to 91, 104 to 121, and 125 to 147; these read FVAI…IIFY, LLVR…KVFI, IIEA…LIVF, and FTFW…YVLL.

It is found in the cell membrane. This is an uncharacterized protein from Aquifex aeolicus (strain VF5).